We begin with the raw amino-acid sequence, 67 residues long: Potassium channel toxin alpha-KTx (67 aa).

The first 25 residues, 1 to 25, serve as a signal peptide directing secretion; that stretch reads MKNIAMKTTVVLTILLLSVLTAINA. Residues 26-31 constitute a propeptide that is removed on maturation; the sequence is DTMKKR. Cystine bridges form between cysteine 35-cysteine 54, cysteine 40-cysteine 59, cysteine 44-cysteine 61, and cysteine 49-cysteine 64.

The protein belongs to the short scorpion toxin superfamily. Potassium channel inhibitor family. As to expression, expressed by the venom gland.

It is found in the secreted. Functionally, blocks Kv1.1/KCNA1, Kv1.2/KCNA2 and Kv1.3/KCNA3 voltage-gated potassium channels. The chain is Potassium channel toxin alpha-KTx from Hoffmannihadrurus gertschi (Scorpion).